Reading from the N-terminus, the 310-residue chain is Methionyl-tRNA formyltransferase (310 aa).

111-114 (SILP) lines the (6S)-5,6,7,8-tetrahydrofolate pocket.

It belongs to the Fmt family.

The catalysed reaction is L-methionyl-tRNA(fMet) + (6R)-10-formyltetrahydrofolate = N-formyl-L-methionyl-tRNA(fMet) + (6S)-5,6,7,8-tetrahydrofolate + H(+). In terms of biological role, attaches a formyl group to the free amino group of methionyl-tRNA(fMet). The formyl group appears to play a dual role in the initiator identity of N-formylmethionyl-tRNA by promoting its recognition by IF2 and preventing the misappropriation of this tRNA by the elongation apparatus. In Finegoldia magna (strain ATCC 29328 / DSM 20472 / WAL 2508) (Peptostreptococcus magnus), this protein is Methionyl-tRNA formyltransferase.